The chain runs to 1779 residues: 6-methylsalicylic acid synthase (1779 aa).

Polar residues predominate over residues 1–11 (MSASRSSTKFS). The interval 1 to 40 (MSASRSSTKFSTPAEGSDNGKEFTTPATSTEGHEVPDRPG) is disordered. Over residues 31-40 (EGHEVPDRPG) the composition is skewed to basic and acidic residues. The Ketosynthase family 3 (KS3) domain occupies 43 to 472 (LADVAIIGMA…GTVSHAVLEA (430 aa)). Residues cysteine 215, histidine 350, and histidine 392 each act as for beta-ketoacyl synthase activity in the active site. Positions 586–883 (WIFSGHGAQW…TPTMVRRQPA (298 aa)) are malonyl-CoA:ACP transacylase (MAT) domain. The active-site For acyl/malonyl transferase activity is the serine 672. Residues 942–1218 (THDPAANNLL…SFAGLEGESF (277 aa)) form a product template (PT) domain region. The tract at residues 948–1064 (NNLLGKRIAL…AAVGAANVVP (117 aa)) is N-terminal hotdog fold. The PKS/mFAS DH domain maps to 948 to 1219 (NNLLGKRIAL…FAGLEGESFS (272 aa)). Residue histidine 980 is the Proton acceptor; for dehydratase activity of the active site. The C-terminal hotdog fold stretch occupies residues 1079 to 1219 (PQKLADSFSI…FAGLEGESFS (141 aa)). The active-site Proton donor; for dehydratase activity is the aspartate 1138. Positions 1703 to 1777 (QHLRDVINGC…HLVKHFTKEL (75 aa)) constitute a Carrier domain. Serine 1737 is subject to O-(pantetheine 4'-phosphoryl)serine.

It catalyses the reaction 3 malonyl-CoA + acetyl-CoA + NADPH + 3 H(+) = 6-methylsalicylate + 3 CO2 + NADP(+) + 4 CoA + H2O. It functions in the pathway secondary metabolite biosynthesis; terpenoid biosynthesis. Functionally, non-reducing polyketide synthase; part of the gene cluster that mediates the biosynthesis of yanuthone D, a fungal isoprenoid epoxycyclohexenone that acts as an antibiotic against fungi and bacteria. The first step of the pathway is the synthesis of 6-methylsalicylic acid (6-MSA) by the polyketide synthase yanA. 6-MSA is then converted to m-cresol by the decarboxylase yanB. The cytochrome P450 monooxygenase yanC then catalyzes the oxidation of m-cresol to toluquinol. Epoxidation of toluquinol is then performed by the short chain dehydrogenase yanD, with the help of yanE, and a further prenylation by yanG leads to 7-deacetoxyyanuthone A. The next step is the hydroxylation of C-22 of 7-deacetoxyyanuthone A by the cytochrome P450 monooxygenase yanH to yield 22-deacetylyanuthone A. O-Mevalon transferase yanI then attaches mevalon to the hydroxyl group of 22-deacetylyanuthone A to produce yanuthone E. Finally, the FAD-dependent monooxygenase yanF oxidizes the hydroxyl group at C15 of yanuthone E to form yanuthone D. Furthermore, several branching points in the pathway lead to the production of yanuthones F and G from 7-deacetoxyyanuthone A; yanuthones H and I from 22-deacetylyanuthone A; and yanuthone J from yanuthone E. The protein is 6-methylsalicylic acid synthase of Aspergillus niger (strain ATCC 1015 / CBS 113.46 / FGSC A1144 / LSHB Ac4 / NCTC 3858a / NRRL 328 / USDA 3528.7).